We begin with the raw amino-acid sequence, 163 residues long: 6,7-dimethyl-8-ribityllumazine synthase (163 aa).

5-amino-6-(D-ribitylamino)uracil-binding positions include phenylalanine 22, 56-58, and 80-82; these read TFE and AVI. 85 to 86 contributes to the (2S)-2-hydroxy-3-oxobutyl phosphate binding site; the sequence is GT. Histidine 88 acts as the Proton donor in catalysis. Methionine 113 contributes to the 5-amino-6-(D-ribitylamino)uracil binding site. Arginine 127 provides a ligand contact to (2S)-2-hydroxy-3-oxobutyl phosphate.

It belongs to the DMRL synthase family.

The enzyme catalyses (2S)-2-hydroxy-3-oxobutyl phosphate + 5-amino-6-(D-ribitylamino)uracil = 6,7-dimethyl-8-(1-D-ribityl)lumazine + phosphate + 2 H2O + H(+). Its pathway is cofactor biosynthesis; riboflavin biosynthesis; riboflavin from 2-hydroxy-3-oxobutyl phosphate and 5-amino-6-(D-ribitylamino)uracil: step 1/2. In terms of biological role, catalyzes the formation of 6,7-dimethyl-8-ribityllumazine by condensation of 5-amino-6-(D-ribitylamino)uracil with 3,4-dihydroxy-2-butanone 4-phosphate. This is the penultimate step in the biosynthesis of riboflavin. The chain is 6,7-dimethyl-8-ribityllumazine synthase from Anaeromyxobacter sp. (strain Fw109-5).